A 223-amino-acid polypeptide reads, in one-letter code: UPF0173 metal-dependent hydrolase TV0864 (223 aa).

It belongs to the UPF0173 family.

This Thermoplasma volcanium (strain ATCC 51530 / DSM 4299 / JCM 9571 / NBRC 15438 / GSS1) protein is UPF0173 metal-dependent hydrolase TV0864.